The sequence spans 906 residues: Putative disease resistance protein At1g59780 (906 aa).

The stretch at 20–59 (KLLSQEYERFQGVEEQITELRDDLKMLMAFLSDADAKKQT) forms a coiled coil. An NB-ARC domain is found at 138–452 (SHAQLERKRE…AEGITYPGNY (315 aa)). 187-194 (GLGGLGKT) is a binding site for ATP. 4 LRR repeats span residues 572 to 597 (LPLL…IGKL), 599 to 619 (HLKY…SLRN), 620 to 644 (LKSL…VFKE), and 825 to 850 (MPLL…RFIS).

Belongs to the disease resistance NB-LRR family.

In terms of biological role, potential disease resistance protein. The sequence is that of Putative disease resistance protein At1g59780 from Arabidopsis thaliana (Mouse-ear cress).